Reading from the N-terminus, the 693-residue chain is Golgin subfamily A member 6A (693 aa).

Positions 14–611 form a coiled coil; sequence LEESRQNKLA…KLLELQELVL (598 aa). 3 disordered regions span residues 20–69, 497–547, and 661–693; these read NKLA…PGDS, LPGE…GTEQ, and NVEP…MQDT. Positions 54-69 are enriched in polar residues; sequence SPETTTSGGCHSPGDS. Residues 537–547 are compositionally biased toward basic and acidic residues; sequence LPKEKADGTEQ. The segment covering 676 to 693 has biased composition (polar residues); that stretch reads DNPTVQQIVQLSPVMQDT.

It belongs to the GOLGA6 family. Highly expressed in seminiferous tubes in testis. Highly expressed in spermatids, barely detectable in late pachytene spermatocytes, and not detectable in spermatogonia. Detected at intermediate levels in pancreas and lymph nodes, and at much lower levels in spleen, peripheral blood leukocytes, skeletal muscle, liver, lung, placenta, brain and heart.

The polypeptide is Golgin subfamily A member 6A (GOLGA6A) (Homo sapiens (Human)).